A 220-amino-acid chain; its full sequence is Ribose-5-phosphate isomerase A (220 aa).

Substrate-binding positions include 28–31 (TGST), 81–84 (DGAD), and 94–97 (KGGG). Glu103 acts as the Proton acceptor in catalysis. Position 121 (Lys121) interacts with substrate.

It belongs to the ribose 5-phosphate isomerase family. As to quaternary structure, homodimer.

It catalyses the reaction aldehydo-D-ribose 5-phosphate = D-ribulose 5-phosphate. The protein operates within carbohydrate degradation; pentose phosphate pathway; D-ribose 5-phosphate from D-ribulose 5-phosphate (non-oxidative stage): step 1/1. In terms of biological role, catalyzes the reversible conversion of ribose-5-phosphate to ribulose 5-phosphate. The polypeptide is Ribose-5-phosphate isomerase A (Hydrogenovibrio crunogenus (strain DSM 25203 / XCL-2) (Thiomicrospira crunogena)).